A 418-amino-acid chain; its full sequence is tRNA-2-methylthio-N(6)-dimethylallyladenosine synthase (418 aa).

In terms of domain architecture, MTTase N-terminal spans 2–118; sequence PGYYLWTIGC…WREIPEGFIL (117 aa). Residues Cys11, Cys47, Cys81, Cys134, Cys138, and Cys141 each contribute to the [4Fe-4S] cluster site. A Radical SAM core domain is found at 120-351; sequence LRPPVSANVT…EDLQKETVGK (232 aa). Residues 346–414 enclose the TRAM domain; the sequence is KETVGKANAA…PWSLQAKLVN (69 aa).

Belongs to the methylthiotransferase family. MiaB subfamily. In terms of assembly, monomer. Requires [4Fe-4S] cluster as cofactor.

Its subcellular location is the cytoplasm. It catalyses the reaction N(6)-dimethylallyladenosine(37) in tRNA + (sulfur carrier)-SH + AH2 + 2 S-adenosyl-L-methionine = 2-methylsulfanyl-N(6)-dimethylallyladenosine(37) in tRNA + (sulfur carrier)-H + 5'-deoxyadenosine + L-methionine + A + S-adenosyl-L-homocysteine + 2 H(+). In terms of biological role, catalyzes the methylthiolation of N6-(dimethylallyl)adenosine (i(6)A), leading to the formation of 2-methylthio-N6-(dimethylallyl)adenosine (ms(2)i(6)A) at position 37 in tRNAs that read codons beginning with uridine. The chain is tRNA-2-methylthio-N(6)-dimethylallyladenosine synthase from Dehalococcoides mccartyi (strain CBDB1).